We begin with the raw amino-acid sequence, 690 residues long: Methionine--tRNA ligase 1 (690 aa).

The short motif at 11–21 is the 'HIGH' region element; the sequence is PYANGHIHIGH. The Zn(2+) site is built by Cys-142, Cys-145, Cys-155, and Cys-158. Residues 328–332 carry the 'KMSKS' region motif; the sequence is KMSKS. Lys-331 contacts ATP. In terms of domain architecture, tRNA-binding spans 590–690; that stretch reads DFSKVDLRVA…SGAKPGMRVH (101 aa).

This sequence belongs to the class-I aminoacyl-tRNA synthetase family. MetG type 1 subfamily. In terms of assembly, homodimer. It depends on Zn(2+) as a cofactor.

The protein localises to the cytoplasm. It catalyses the reaction tRNA(Met) + L-methionine + ATP = L-methionyl-tRNA(Met) + AMP + diphosphate. Functionally, is required not only for elongation of protein synthesis but also for the initiation of all mRNA translation through initiator tRNA(fMet) aminoacylation. This chain is Methionine--tRNA ligase 1, found in Sorangium cellulosum (strain So ce56) (Polyangium cellulosum (strain So ce56)).